The sequence spans 228 residues: Translin (228 aa).

Residues 86–90 are DNA/RNA binding; that stretch reads RFHEH. The leucine-zipper stretch occupies residues 177–198; the sequence is LDSGFRLLNLKNDSLRKRYDGL. Lys187 carries the N6-acetyllysine modification. Ser190 carries the post-translational modification Phosphoserine. Lys199 bears the N6-acetyllysine mark.

This sequence belongs to the translin family. As to quaternary structure, ring-shaped heterooctamer of six TSN and two TSNAX subunits, DNA/RNA binding occurs inside the ring.

It is found in the cytoplasm. It localises to the nucleus. DNA-binding protein that specifically recognizes consensus sequences at the breakpoint junctions in chromosomal translocations, mostly involving immunoglobulin (Ig)/T-cell receptor gene segments. Seems to recognize single-stranded DNA ends generated by staggered breaks occurring at recombination hot spots. Functionally, exhibits both single-stranded and double-stranded endoribonuclease activity. May act as an activator of RNA-induced silencing complex (RISC) by facilitating endonucleolytic cleavage of the siRNA passenger strand. This Cricetulus griseus (Chinese hamster) protein is Translin (TSN).